The chain runs to 120 residues: ATP-dependent Clp protease adapter protein ClpS (120 aa).

This sequence belongs to the ClpS family. In terms of assembly, binds to the N-terminal domain of the chaperone ClpA.

Involved in the modulation of the specificity of the ClpAP-mediated ATP-dependent protein degradation. The protein is ATP-dependent Clp protease adapter protein ClpS of Pseudomonas savastanoi pv. phaseolicola (strain 1448A / Race 6) (Pseudomonas syringae pv. phaseolicola (strain 1448A / Race 6)).